A 118-amino-acid polypeptide reads, in one-letter code: MPRVKGGTVTRQRRKKVIKLAKGYYGSKSTLFKVANQQVMKSLMYAFRDRRQKKRDFRKLWITRINAAARMNGLSYSRLMHGLKNAGIEVNRKMLADLAVHDEKAFAELATVAKNNIN.

Belongs to the bacterial ribosomal protein bL20 family.

Functionally, binds directly to 23S ribosomal RNA and is necessary for the in vitro assembly process of the 50S ribosomal subunit. It is not involved in the protein synthesizing functions of that subunit. In Bacillus mycoides (strain KBAB4) (Bacillus weihenstephanensis), this protein is Large ribosomal subunit protein bL20.